Consider the following 131-residue polypeptide: MRHRHGLRKLNRTSSHRLAMLRNMSNSLFQHELIKTTVPKAKELRKVVEPLITLAKKDTVANRRLAFARLRDRDMVTKLFTELGPRYATRPGGYTRILKFGFRQGDNAPMALVELVDRPEITEAPAEEAAE.

Belongs to the bacterial ribosomal protein bL17 family. In terms of assembly, part of the 50S ribosomal subunit. Contacts protein L32.

The protein is Large ribosomal subunit protein bL17 of Cupriavidus necator (strain ATCC 17699 / DSM 428 / KCTC 22496 / NCIMB 10442 / H16 / Stanier 337) (Ralstonia eutropha).